The following is an 89-amino-acid chain: MPLNTEKKQELINSHQTHATDTGSVEVQVAMLSERITQLTGHLQSNKHDYSSRQGLMKMLGRRKSLLGYLKSQSSERYDTLIQKLGIRG.

Over residues 1 to 10 (MPLNTEKKQE) the composition is skewed to basic and acidic residues. The tract at residues 1-22 (MPLNTEKKQELINSHQTHATDT) is disordered. Over residues 11-22 (LINSHQTHATDT) the composition is skewed to polar residues.

Belongs to the universal ribosomal protein uS15 family. Part of the 30S ribosomal subunit. Forms a bridge to the 50S subunit in the 70S ribosome, contacting the 23S rRNA.

Functionally, one of the primary rRNA binding proteins, it binds directly to 16S rRNA where it helps nucleate assembly of the platform of the 30S subunit by binding and bridging several RNA helices of the 16S rRNA. Forms an intersubunit bridge (bridge B4) with the 23S rRNA of the 50S subunit in the ribosome. This chain is Small ribosomal subunit protein uS15, found in Synechococcus sp. (strain RCC307).